A 359-amino-acid polypeptide reads, in one-letter code: ATP-dependent kinase YFH7 (359 aa).

An ATP-binding site is contributed by 31 to 39 (GPPGSGKST).

It belongs to the YFH7 family.

Functionally, ATP-dependent kinase that could be involved in endoplasmic reticulum membrane assembly. The sequence is that of ATP-dependent kinase YFH7 (YFH7) from Vanderwaltozyma polyspora (strain ATCC 22028 / DSM 70294 / BCRC 21397 / CBS 2163 / NBRC 10782 / NRRL Y-8283 / UCD 57-17) (Kluyveromyces polysporus).